The sequence spans 264 residues: Undecaprenyl-diphosphatase (264 aa).

8 helical membrane passes run 7-27, 41-61, 89-109, 114-134, 144-164, 186-206, 219-239, and 244-264; these read IVLALIQGLSEFLPISSSAHL, LIFDVVVHMGTLSAVIFYYQA, VLLGTIPIGLVGMIFKDFVAV, IEIIAYTTLVFGLLLGFASWF, TISWIDVSFVSMMQILALIPG, IQFSFLLSIPVITLSLILMLI, LLVLGFVISTISAYATIIFVI, and MVGMTPFVIYRLILGVFLFFL.

The protein belongs to the UppP family.

The protein resides in the cell inner membrane. It catalyses the reaction di-trans,octa-cis-undecaprenyl diphosphate + H2O = di-trans,octa-cis-undecaprenyl phosphate + phosphate + H(+). Its function is as follows. Catalyzes the dephosphorylation of undecaprenyl diphosphate (UPP). Confers resistance to bacitracin. The sequence is that of Undecaprenyl-diphosphatase from Vesicomyosocius okutanii subsp. Calyptogena okutanii (strain HA).